Consider the following 521-residue polypeptide: Protein nucleotidyltransferase YdiU (521 aa).

ATP is bound by residues Gly-109, Gly-111, Arg-112, Lys-131, Asp-143, Gly-144, Arg-194, and Arg-201. The Proton acceptor role is filled by Asp-270. Mg(2+) is bound by residues Asn-271 and Asp-280. Asp-280 provides a ligand contact to ATP.

This sequence belongs to the SELO family. Mg(2+) is required as a cofactor. The cofactor is Mn(2+).

The catalysed reaction is L-seryl-[protein] + ATP = 3-O-(5'-adenylyl)-L-seryl-[protein] + diphosphate. It catalyses the reaction L-threonyl-[protein] + ATP = 3-O-(5'-adenylyl)-L-threonyl-[protein] + diphosphate. It carries out the reaction L-tyrosyl-[protein] + ATP = O-(5'-adenylyl)-L-tyrosyl-[protein] + diphosphate. The enzyme catalyses L-histidyl-[protein] + UTP = N(tele)-(5'-uridylyl)-L-histidyl-[protein] + diphosphate. The catalysed reaction is L-seryl-[protein] + UTP = O-(5'-uridylyl)-L-seryl-[protein] + diphosphate. It catalyses the reaction L-tyrosyl-[protein] + UTP = O-(5'-uridylyl)-L-tyrosyl-[protein] + diphosphate. Its function is as follows. Nucleotidyltransferase involved in the post-translational modification of proteins. It can catalyze the addition of adenosine monophosphate (AMP) or uridine monophosphate (UMP) to a protein, resulting in modifications known as AMPylation and UMPylation. The protein is Protein nucleotidyltransferase YdiU of Burkholderia pseudomallei (strain K96243).